Here is a 325-residue protein sequence, read N- to C-terminus: Anthranilate phosphoribosyltransferase (325 aa).

Residues Gly73, 76-77, Thr81, 83-86, 100-108, and Ser112 contribute to the 5-phospho-alpha-D-ribose 1-diphosphate site; these read GD, NIST, and KHGNVSITS. Gly73 contacts anthranilate. Ser85 serves as a coordination point for Mg(2+). Asn103 is an anthranilate binding site. Arg158 provides a ligand contact to anthranilate. The Mg(2+) site is built by Asp216 and Glu217.

Belongs to the anthranilate phosphoribosyltransferase family. In terms of assembly, homodimer. Mg(2+) serves as cofactor.

It catalyses the reaction N-(5-phospho-beta-D-ribosyl)anthranilate + diphosphate = 5-phospho-alpha-D-ribose 1-diphosphate + anthranilate. It functions in the pathway amino-acid biosynthesis; L-tryptophan biosynthesis; L-tryptophan from chorismate: step 2/5. In terms of biological role, catalyzes the transfer of the phosphoribosyl group of 5-phosphorylribose-1-pyrophosphate (PRPP) to anthranilate to yield N-(5'-phosphoribosyl)-anthranilate (PRA). The sequence is that of Anthranilate phosphoribosyltransferase from Methanococcus aeolicus (strain ATCC BAA-1280 / DSM 17508 / OCM 812 / Nankai-3).